Here is a 131-residue protein sequence, read N- to C-terminus: D-ribose pyranase (131 aa).

Catalysis depends on His20, which acts as the Proton donor. Substrate-binding positions include Asp28, His98, and 120–122 (YSN).

Belongs to the RbsD / FucU family. RbsD subfamily. Homodecamer.

The protein resides in the cytoplasm. It carries out the reaction beta-D-ribopyranose = beta-D-ribofuranose. It participates in carbohydrate metabolism; D-ribose degradation; D-ribose 5-phosphate from beta-D-ribopyranose: step 1/2. Its function is as follows. Catalyzes the interconversion of beta-pyran and beta-furan forms of D-ribose. The protein is D-ribose pyranase of Pediococcus pentosaceus (strain ATCC 25745 / CCUG 21536 / LMG 10740 / 183-1w).